Reading from the N-terminus, the 516-residue chain is L-amino acid oxidase bordonein-L (516 aa).

An N-terminal signal peptide occupies residues 1–18; that stretch reads MNVFFMFSLLFLAALGSC. The cysteines at positions 28 and 189 are disulfide-linked. Residues 61–62, 81–82, Arg89, and 103–106 each bind FAD; these read MA, EA, and GPMR. 2 residues coordinate substrate: Arg106 and His239. Val279 contacts FAD. The cysteines at positions 349 and 430 are disulfide-linked. N-linked (GlcNAc...) asparagine glycosylation occurs at Asn379. Substrate is bound at residue Tyr390. FAD-binding positions include Glu475 and 482–487; that span reads GWIDST. Position 482–483 (482–483) interacts with substrate; sequence GW.

Homodimer; non-covalently linked. The cofactor is FAD. N-glycosylated. N-glycan probably consists of the disaccharide N-acetylglucosamine-fucose (HexNAc-Fuc). In terms of tissue distribution, expressed by the venom gland.

The protein resides in the secreted. It catalyses the reaction an L-alpha-amino acid + O2 + H2O = a 2-oxocarboxylate + H2O2 + NH4(+). The enzyme catalyses L-leucine + O2 + H2O = 4-methyl-2-oxopentanoate + H2O2 + NH4(+). The catalysed reaction is L-phenylalanine + O2 + H2O = 3-phenylpyruvate + H2O2 + NH4(+). It carries out the reaction L-tryptophan + O2 + H2O = indole-3-pyruvate + H2O2 + NH4(+). It catalyses the reaction L-methionine + O2 + H2O = 4-methylsulfanyl-2-oxobutanoate + H2O2 + NH4(+). The enzyme catalyses L-isoleucine + O2 + H2O = (S)-3-methyl-2-oxopentanoate + H2O2 + NH4(+). The catalysed reaction is L-arginine + O2 + H2O = 5-guanidino-2-oxopentanoate + H2O2 + NH4(+). It carries out the reaction L-histidine + O2 + H2O = 3-(imidazol-5-yl)pyruvate + H2O2 + NH4(+). In terms of biological role, catalyzes an oxidative deamination of predominantly hydrophobic and aromatic L-amino acids, thus producing hydrogen peroxide that may contribute to the diverse toxic effects of this enzyme. Is highly active on L-Met, L-Leu, L-Trp, and L-Phe, moderately active on L-Ile, L-His, and L-Arg, and weakly or not active on L-Gln, L-Val, L-Asn, L-Ala, L-Lys, L-Ser, L-Thr, L-Pro, L-Asp, L-Gly, L-Tyr, L-Cys and L-Glu. This enzyme exhibits diverse biological activities, such as hemorrhage, hemolysis, edema, apoptosis of vascular endothelial cells or tumor cell lines, antibacterial and antiparasitic activities, as well as regulation of platelet aggregation. Its effect on platelets is controversial, since it either induces aggregation or inhibits agonist-induced aggregation. These different effects are probably due to different experimental conditions. In vitro, the enzyme exhibits cytotoxicity against fibroblast cell line and kills Leishmania amazonensis promastigotes, intensified by substrate addition. This Crotalus durissus terrificus (South American rattlesnake) protein is L-amino acid oxidase bordonein-L.